A 44-amino-acid chain; its full sequence is Thymosin beta-12 (44 aa).

Composition is skewed to basic and acidic residues over residues 1–25 (MSDK…ETQE) and 33–44 (ETIEQEKAAATS). A disordered region spans residues 1 to 44 (MSDKPDISEVTSFDKTKLKKTETQEKNPLPSKETIEQEKAAATS). Ser2 is subject to N-acetylserine.

The protein belongs to the thymosin beta family.

It localises to the cytoplasm. It is found in the cytoskeleton. In terms of biological role, plays an important role in the organization of the cytoskeleton. Binds to and sequesters actin monomers (G actin) and therefore inhibits actin polymerization. This chain is Thymosin beta-12, found in Lateolabrax japonicus (Japanese sea perch).